The sequence spans 625 residues: Chaperone protein HtpG (625 aa).

The tract at residues 1 to 332 is a; substrate-binding; it reads MSKKTNAPVQ…TEDLSLNVSR (332 aa). The interval 333–545 is b; sequence EVVQSSPVMA…KDAMDSQMER (213 aa). Residues 546-625 are c; it reads MMKMMQQEMP…ELIEAATLSR (80 aa).

The protein belongs to the heat shock protein 90 family. In terms of assembly, homodimer.

It is found in the cytoplasm. Its function is as follows. Molecular chaperone. Has ATPase activity. This chain is Chaperone protein HtpG, found in Chlorobium phaeovibrioides (strain DSM 265 / 1930) (Prosthecochloris vibrioformis (strain DSM 265)).